A 764-amino-acid polypeptide reads, in one-letter code: 1,4-alpha-glucan branching enzyme GlgB (764 aa).

Residue aspartate 434 is the Nucleophile of the active site. Glutamate 487 serves as the catalytic Proton donor.

This sequence belongs to the glycosyl hydrolase 13 family. GlgB subfamily. As to quaternary structure, monomer.

The catalysed reaction is Transfers a segment of a (1-&gt;4)-alpha-D-glucan chain to a primary hydroxy group in a similar glucan chain.. Its pathway is glycan biosynthesis; glycogen biosynthesis. In terms of biological role, catalyzes the formation of the alpha-1,6-glucosidic linkages in glycogen by scission of a 1,4-alpha-linked oligosaccharide from growing alpha-1,4-glucan chains and the subsequent attachment of the oligosaccharide to the alpha-1,6 position. The polypeptide is 1,4-alpha-glucan branching enzyme GlgB (Trichormus variabilis (strain ATCC 29413 / PCC 7937) (Anabaena variabilis)).